The sequence spans 464 residues: Anthranilate synthase component 1 (464 aa).

Residues Ser-41 and 236–238 contribute to the L-tryptophan site; that span reads PYM. Residue 271–272 coordinates chorismate; that stretch reads GT. Glu-298 contacts Mg(2+). Chorismate is bound by residues Tyr-386, Arg-406, 420 to 422, and Gly-422; that span reads GAG. A Mg(2+)-binding site is contributed by Glu-435.

Belongs to the anthranilate synthase component I family. Heterotetramer consisting of two non-identical subunits: a beta subunit (TrpG) and a large alpha subunit (TrpE). Mg(2+) is required as a cofactor.

It catalyses the reaction chorismate + L-glutamine = anthranilate + pyruvate + L-glutamate + H(+). It participates in amino-acid biosynthesis; L-tryptophan biosynthesis; L-tryptophan from chorismate: step 1/5. With respect to regulation, feedback inhibited by tryptophan. In terms of biological role, part of a heterotetrameric complex that catalyzes the two-step biosynthesis of anthranilate, an intermediate in the biosynthesis of L-tryptophan. In the first step, the glutamine-binding beta subunit (TrpG) of anthranilate synthase (AS) provides the glutamine amidotransferase activity which generates ammonia as a substrate that, along with chorismate, is used in the second step, catalyzed by the large alpha subunit of AS (TrpE) to produce anthranilate. In the absence of TrpG, TrpE can synthesize anthranilate directly from chorismate and high concentrations of ammonia. This Methanothermobacter thermautotrophicus (strain ATCC 29096 / DSM 1053 / JCM 10044 / NBRC 100330 / Delta H) (Methanobacterium thermoautotrophicum) protein is Anthranilate synthase component 1 (trpE).